A 204-amino-acid chain; its full sequence is Holliday junction branch migration complex subunit RuvA (204 aa).

The domain I stretch occupies residues 1–64 (MIGKLKGTID…EDQLKLFGFM (64 aa)). Positions 65–143 (TALEREWFNL…AFAGEAINIG (79 aa)) are domain II. Positions 144 to 151 (LKQELGEG) are flexible linker. The tract at residues 152–204 (VAAAPVADAVSALTNLGYSRDQAANAIAAAMKTAGEGADSAKLIRLGLKELAR) is domain III.

It belongs to the RuvA family. As to quaternary structure, homotetramer. Forms an RuvA(8)-RuvB(12)-Holliday junction (HJ) complex. HJ DNA is sandwiched between 2 RuvA tetramers; dsDNA enters through RuvA and exits via RuvB. An RuvB hexamer assembles on each DNA strand where it exits the tetramer. Each RuvB hexamer is contacted by two RuvA subunits (via domain III) on 2 adjacent RuvB subunits; this complex drives branch migration. In the full resolvosome a probable DNA-RuvA(4)-RuvB(12)-RuvC(2) complex forms which resolves the HJ.

The protein localises to the cytoplasm. The RuvA-RuvB-RuvC complex processes Holliday junction (HJ) DNA during genetic recombination and DNA repair, while the RuvA-RuvB complex plays an important role in the rescue of blocked DNA replication forks via replication fork reversal (RFR). RuvA specifically binds to HJ cruciform DNA, conferring on it an open structure. The RuvB hexamer acts as an ATP-dependent pump, pulling dsDNA into and through the RuvAB complex. HJ branch migration allows RuvC to scan DNA until it finds its consensus sequence, where it cleaves and resolves the cruciform DNA. The polypeptide is Holliday junction branch migration complex subunit RuvA (Rhizobium johnstonii (strain DSM 114642 / LMG 32736 / 3841) (Rhizobium leguminosarum bv. viciae)).